The following is a 301-amino-acid chain: Probable alpha-L-glutamate ligase (301 aa).

The ATP-grasp domain occupies 104 to 287; the sequence is LQLLSRKGIG…VAGMIFDFIE (184 aa). ATP is bound by residues K141, 178–179, D187, and 211–213; these read EF and RSN. Residues D248, E260, and N262 each coordinate Mg(2+). D248, E260, and N262 together coordinate Mn(2+).

This sequence belongs to the RimK family. It depends on Mg(2+) as a cofactor. Requires Mn(2+) as cofactor.

The protein is Probable alpha-L-glutamate ligase of Vibrio parahaemolyticus serotype O3:K6 (strain RIMD 2210633).